The sequence spans 397 residues: Mannosylglycerate synthase (397 aa).

GDP-alpha-D-mannose contacts are provided by residues 7-11 (PFKHE), Ile-35, Gln-66, Lys-76, Asp-100, and 100-101 (DA). Residue Asp-102 participates in a divalent metal cation binding. (R)-glycerate contacts are provided by residues Arg-131 and 136 to 139 (AMIT). Leu-163 and Asp-192 together coordinate GDP-alpha-D-mannose. His-217 serves as a coordination point for a divalent metal cation. Residues Arg-218 and Tyr-220 each contribute to the GDP-alpha-D-mannose site.

This sequence belongs to the glycosyltransferase 78 family. Homotetramer. Dimer of dimers. Mg(2+) is required as a cofactor. The cofactor is Ca(2+). It depends on Mn(2+) as a cofactor. Requires Ni(2+) as cofactor. Co(2+) serves as cofactor.

The enzyme catalyses (R)-glycerate + GDP-alpha-D-mannose = (2R)-2-O-(alpha-D-mannosyl)-glycerate + GDP + H(+). With respect to regulation, inhibited by GDP. Its function is as follows. Involved in the biosynthesis of the stress protectant 2-O-alpha-D-mannosyl glycerate (MG) which is produced in response to growth at supraoptimal temperature and salinity, and protects several enzymes against inactivation by temperature, freeze-drying and osmotic stress. Catalyzes the condensation of alpha-GDP-D-mannose (GDP-Man) with D-glycerate to produce alpha-mannosyl-D-glycerate. It is specific for GDP-Man, but it can also use alpha-GDP-D-glucose (GDP-Glc), beta-GDP-D-fructose, alpha-UDP-D-mannose and alpha-UDP-D-glucose as sugar donors. It is specific for D-glycerate, but it can also use D-lactate and glycolate as sugar acceptors. This reaction occurs with a net retention of anomeric configuration; the newly formed glycosidic linkage has the same alpha configuration as the sugar donor. This is Mannosylglycerate synthase (mgs) from Rhodothermus marinus (Rhodothermus obamensis).